A 126-amino-acid polypeptide reads, in one-letter code: Holo-[acyl-carrier-protein] synthase (126 aa).

Mg(2+) contacts are provided by Asp-8 and Glu-57.

Belongs to the P-Pant transferase superfamily. AcpS family. The cofactor is Mg(2+).

The protein localises to the cytoplasm. It carries out the reaction apo-[ACP] + CoA = holo-[ACP] + adenosine 3',5'-bisphosphate + H(+). In terms of biological role, transfers the 4'-phosphopantetheine moiety from coenzyme A to a Ser of acyl-carrier-protein. In Halorhodospira halophila (strain DSM 244 / SL1) (Ectothiorhodospira halophila (strain DSM 244 / SL1)), this protein is Holo-[acyl-carrier-protein] synthase.